A 511-amino-acid chain; its full sequence is Lysine--tRNA ligase (511 aa).

Mg(2+) is bound by residues glutamate 403 and glutamate 410.

This sequence belongs to the class-II aminoacyl-tRNA synthetase family. Homodimer. Requires Mg(2+) as cofactor.

Its subcellular location is the cytoplasm. It carries out the reaction tRNA(Lys) + L-lysine + ATP = L-lysyl-tRNA(Lys) + AMP + diphosphate. The protein is Lysine--tRNA ligase of Onion yellows phytoplasma (strain OY-M).